A 292-amino-acid polypeptide reads, in one-letter code: ATP synthase gamma chain (292 aa).

This sequence belongs to the ATPase gamma chain family. In terms of assembly, F-type ATPases have 2 components, CF(1) - the catalytic core - and CF(0) - the membrane proton channel. CF(1) has five subunits: alpha(3), beta(3), gamma(1), delta(1), epsilon(1). CF(0) has three main subunits: a, b and c.

Its subcellular location is the cell inner membrane. In terms of biological role, produces ATP from ADP in the presence of a proton gradient across the membrane. The gamma chain is believed to be important in regulating ATPase activity and the flow of protons through the CF(0) complex. The sequence is that of ATP synthase gamma chain from Hydrogenobaculum sp. (strain Y04AAS1).